Reading from the N-terminus, the 168-residue chain is Shikimate kinase (168 aa).

11–16 lines the ATP pocket; the sequence is GAGKTT. Threonine 15 contributes to the Mg(2+) binding site. Positions 33, 57, and 78 each coordinate substrate. Arginine 118 contacts ATP. Position 136 (arginine 136) interacts with substrate. Arginine 153 contacts ATP.

It belongs to the shikimate kinase family. Monomer. The cofactor is Mg(2+).

The protein resides in the cytoplasm. The catalysed reaction is shikimate + ATP = 3-phosphoshikimate + ADP + H(+). The protein operates within metabolic intermediate biosynthesis; chorismate biosynthesis; chorismate from D-erythrose 4-phosphate and phosphoenolpyruvate: step 5/7. Catalyzes the specific phosphorylation of the 3-hydroxyl group of shikimic acid using ATP as a cosubstrate. In Enterococcus faecalis (strain ATCC 700802 / V583), this protein is Shikimate kinase.